The primary structure comprises 736 residues: Factor of DNA methylation 4 (736 aa).

2 stretches are compositionally biased toward basic and acidic residues: residues 80–90 (RKYLRPRERPR) and 144–167 (DSGRSGEERLKFSDKPDPFFSNED). A disordered region spans residues 80-167 (RKYLRPRERP…KPDPFFSNED (88 aa)). A coiled-coil region spans residues 360 to 597 (TLVSNLENTL…RSMRELTTRA (238 aa)).

Functionally, acts in association with FDM3 and FDM5 for RNA-directed DNA methylation (RdDM). This chain is Factor of DNA methylation 4, found in Arabidopsis thaliana (Mouse-ear cress).